The sequence spans 232 residues: Dehydrin DHN2 (232 aa).

Residues 1–12 (MSQYQNQYGAQT) show a composition bias toward polar residues. Disordered regions lie at residues 1–92 (MSQY…STNT), 131–156 (PGTEQSRTHTDGTGYGSTGYGASGGG), and 173–232 (PGDK…CTGH). Over residues 73–82 (THTGGVGGYG) the composition is skewed to gly residues. The segment covering 131–140 (PGTEQSRTHT) has biased composition (basic and acidic residues). Over residues 143 to 156 (TGYGSTGYGASGGG) the composition is skewed to gly residues. A compositionally biased stretch (basic and acidic residues) spans 200–223 (YVREEHRVDHGEKKGIMDKIKEKL).

The protein belongs to the plant dehydrin family.

This is Dehydrin DHN2 (DHN2) from Pisum sativum (Garden pea).